A 530-amino-acid chain; its full sequence is UDP-glucuronosyltransferase 1A8 (530 aa).

A signal peptide spans 1 to 25; it reads MARTGWTSPIPLCVSLLLTCGFAEA. Asn-71, Asn-292, and Asn-344 each carry an N-linked (GlcNAc...) asparagine glycan. The chain crosses the membrane as a helical span at residues 488-504; the sequence is VIGFLLAVVLTVAFITF.

This sequence belongs to the UDP-glycosyltransferase family. As to quaternary structure, homodimer. Homooligomer. Interacts with UGT1A1, UGT1A3, UGT1A4, UGT1A6, UGT1A7, UGT1A9 and UGT1A10 to form heterodimers. Isoform 1 interacts with isoform 2/i2 suggesting that oligomerization is involved in negative regulation of transferase activity by isoform 2. Isoform 1 also interacts with respective i2 isoforms of UGT1A1, UGT1A3, UGT1A4, UGT1A6, UGT1A7, UGT1A9 and UGT1A10. As to expression, expressed in kidney, colon and small intestine. Not expressed in liver. In terms of tissue distribution, expressed in liver, kidney, colon and small intestine.

It is found in the endoplasmic reticulum membrane. The enzyme catalyses glucuronate acceptor + UDP-alpha-D-glucuronate = acceptor beta-D-glucuronoside + UDP + H(+). It catalyses the reaction 17beta-estradiol + UDP-alpha-D-glucuronate = 17beta-estradiol 3-O-(beta-D-glucuronate) + UDP + H(+). It carries out the reaction 17alpha-estradiol + UDP-alpha-D-glucuronate = 17alpha-estradiol 3-O-(beta-D-glucuronate) + UDP + H(+). The catalysed reaction is estrone + UDP-alpha-D-glucuronate = estrone 3-O-(beta-D-glucuronate) + UDP + H(+). The enzyme catalyses 16alpha,17alpha-estriol + UDP-alpha-D-glucuronate = 16alpha,17alpha-estriol 3-O-(beta-D-glucuronate) + UDP + H(+). It catalyses the reaction 2-hydroxy-17beta-estradiol + UDP-alpha-D-glucuronate = 2-hydroxy-17beta-estradiol 3-O-(beta-D-glucuronate) + UDP + H(+). It carries out the reaction 2-hydroxy-17beta-estradiol + UDP-alpha-D-glucuronate = 17beta-estradiol 2-O-(beta-D-glucuronate) + UDP + H(+). The catalysed reaction is 2-hydroxyestrone + UDP-alpha-D-glucuronate = 2-hydroxyestrone 3-O-(beta-D-glucuronate) + UDP + H(+). The enzyme catalyses 4-hydroxy-17beta-estradiol + UDP-alpha-D-glucuronate = 4-hydroxy-17beta-estradiol 3-O-(beta-D-glucuronate) + UDP + H(+). It catalyses the reaction 4-hydroxy-17beta-estradiol + UDP-alpha-D-glucuronate = 17beta-estradiol 4-O-(beta-D-glucuronate) + UDP + H(+). It carries out the reaction 4-hydroxyestrone + UDP-alpha-D-glucuronate = 4-hydroxyestrone 3-O-(beta-D-glucuronate) + UDP + H(+). The catalysed reaction is 4-hydroxyestrone + UDP-alpha-D-glucuronate = estrone 4-O-(beta-D-glucuronate) + UDP + H(+). The enzyme catalyses 2-methoxy-17beta-estradiol + UDP-alpha-D-glucuronate = 2-methoxy-17beta-estradiol 3-O-(beta-D-glucuronate) + UDP + H(+). It catalyses the reaction 2-methoxyestrone + UDP-alpha-D-glucuronate = 2-methoxyestrone 3-O-(beta-D-glucuronate) + UDP + H(+). It carries out the reaction 4-methoxy-17beta-estradiol + UDP-alpha-D-glucuronate = 4-methoxy-17beta-estradiol 3-O-(beta-D-glucuronate) + UDP + H(+). The catalysed reaction is 4-methoxyestrone + UDP-alpha-D-glucuronate = 4-methoxyestrone 3-O-(beta-D-glucuronate) + UDP + H(+). The enzyme catalyses 17beta-hydroxy-5alpha-androstan-3-one + UDP-alpha-D-glucuronate = 5alpha-dihydrotestosterone 17-O-(beta-D-glucuronate) + UDP + H(+). It catalyses the reaction 5alpha-dihydrotestosterone 17-O-(beta-D-glucuronate) + UDP-alpha-D-glucuronate = 5alpha-dihydrotestosterone 17-O-[beta-D-glucuronosyl-(1-&gt;2)-glucuronate] + UDP + H(+). It carries out the reaction prunetin + UDP-alpha-D-glucuronate = prunetin-4'-O-beta-D-glucuronide + UDP. The catalysed reaction is prunetin + UDP-alpha-D-glucuronate = prunetin-5-O-beta-D-glucuronide + UDP. The enzyme catalyses candesartan + UDP-alpha-D-glucuronate = candesartan O-beta-D-glucuronoside + UDP. It catalyses the reaction mycophenolate + UDP-alpha-D-glucuronate = mycophenolate 7-O-beta-D-glucuronide + UDP + H(+). It carries out the reaction (E)-ferulate + UDP-alpha-D-glucuronate = (E)-4-O-(beta-D-glucuronosyl)-ferulate + UDP + H(+). The catalysed reaction is (E)-ferulate + UDP-alpha-D-glucuronate = (E)-ferulic acid beta-D-glucuronate ester + UDP. Functionally, UDP-glucuronosyltransferase (UGT) that catalyzes phase II biotransformation reactions in which lipophilic substrates are conjugated with glucuronic acid to increase the metabolite's water solubility, thereby facilitating excretion into either the urine or bile. Essential for the elimination and detoxification of drugs, xenobiotics and endogenous compounds. Catalyzes the glucuronidation of endogenous steroid hormones such as androgens and estrogens. Produces dihydrotestosterone (DHT) diglucuronide from the DHT after two subsequent glucoronidation steps. Involved in the glucuronidation of the phytochemical ferulic acid at the phenolic or the carboxylic acid group. Also catalyzes the glucuronidation of the isoflavones genistein, daidzein, glycitein, formononetin, biochanin A and prunetin, which are phytoestrogens with anticancer and cardiovascular properties. Involved in the glucuronidation of the AGTR1 angiotensin receptor antagonist caderastan, a drug which can inhibit the effect of angiotensin II. Also metabolizes mycophenolate, an immunosuppressive agent. Its function is as follows. Lacks UGT glucuronidation activity but acts as a negative regulator of isoform 1. The polypeptide is UDP-glucuronosyltransferase 1A8 (Homo sapiens (Human)).